We begin with the raw amino-acid sequence, 152 residues long: 3-hydroxyacyl-[acyl-carrier-protein] dehydratase FabZ (152 aa).

His58 is a catalytic residue.

The protein belongs to the thioester dehydratase family. FabZ subfamily.

Its subcellular location is the cytoplasm. The enzyme catalyses a (3R)-hydroxyacyl-[ACP] = a (2E)-enoyl-[ACP] + H2O. Its function is as follows. Involved in unsaturated fatty acids biosynthesis. Catalyzes the dehydration of short chain beta-hydroxyacyl-ACPs and long chain saturated and unsaturated beta-hydroxyacyl-ACPs. This chain is 3-hydroxyacyl-[acyl-carrier-protein] dehydratase FabZ, found in Prochlorococcus marinus (strain MIT 9312).